We begin with the raw amino-acid sequence, 126 residues long: MAFDKDAFLTALDSMTVLELNDLVEAIEEKFGVSAAAMAAPAAGGAAGGGAAAAEEKTEFNVVLADAGANKVAVIKAVREITGLGLKEAKDLVDGAPKNVKEGIAKADAEAAVKKLVEAGAKAELK.

This sequence belongs to the bacterial ribosomal protein bL12 family. As to quaternary structure, homodimer. Part of the ribosomal stalk of the 50S ribosomal subunit. Forms a multimeric L10(L12)X complex, where L10 forms an elongated spine to which 2 to 4 L12 dimers bind in a sequential fashion. Binds GTP-bound translation factors.

Functionally, forms part of the ribosomal stalk which helps the ribosome interact with GTP-bound translation factors. Is thus essential for accurate translation. This is Large ribosomal subunit protein bL12 from Acidovorax sp. (strain JS42).